A 487-amino-acid chain; its full sequence is Arginine ADP-riboxanase OspC3 (487 aa).

A compositionally biased stretch (polar residues) spans Met-1–Asn-14. Residues Met-1–Ala-41 are disordered. NAD(+) is bound by residues His-137, Gln-138, Ser-139, Ser-164, Asn-167, and Thr-168. Glu-325 is a catalytic residue. ANK repeat units follow at residues Asp-368 to Asp-398 and Arg-444 to Leu-473.

Belongs to the OspC family.

The protein localises to the secreted. It localises to the host cytoplasm. It catalyses the reaction L-arginyl-[protein] + NAD(+) = ADP-riboxanated L-argininyl-[protein] + nicotinamide + NH4(+) + H(+). ADP-riboxanase effector that inhibits host cell pyroptosis. Acts by mediating arginine ADP-riboxanation of host CASP4/CASP11, blocking CASP4/CASP11 autoprocessing. This prevents CASP4 activation and ability to recognize and cleave GSDMD, thereby inhibiting LPS-induced pyroptosis. ADP-riboxanation takes place in two steps: OspC3 first catalyzes ADP-ribosylation of target Arg, and then initiates a deamination to remove one N-omega group. This is Arginine ADP-riboxanase OspC3 from Chromobacterium sp. (strain ATCC 53434 / SC 14030).